The primary structure comprises 453 residues: Maltotriose-binding protein (453 aa).

The N-terminal stretch at 1–29 (MKRGIYAVLLVGVLIFSVVASGCIGGTQT) is a signal peptide. Positions 27 to 65 (TQTQTETQTPEKTQTPTTTQPSPTTTTSPTQTTSQTPTE) are enriched in low complexity. The tract at residues 27–73 (TQTQTETQTPEKTQTPTTTQPSPTTTTSPTQTTSQTPTETETHTQEA) is disordered.

The protein belongs to the bacterial solute-binding protein 1 family.

Its function is as follows. Involved in an abc transport system for maltotriose. This is Maltotriose-binding protein (malE) from Pyrococcus abyssi (strain GE5 / Orsay).